The primary structure comprises 457 residues: Glycine receptor subunit alpha-1 (457 aa).

An N-terminal signal peptide occupies residues 1-28 (MYSFNTLRLYLWETIVFFSLAASKEAEA). The Extracellular segment spans residues 29–250 (ARSASKPMSP…RFHLERQMGY (222 aa)). Asparagine 66 is a glycosylation site (N-linked (GlcNAc...) asparagine). 2 residues coordinate glycine: arginine 93 and serine 157. An intrachain disulfide couples cysteine 166 to cysteine 180. Residues glutamate 220 and aspartate 222 each contribute to the Zn(2+) site. Cysteines 226 and 237 form a disulfide. Position 230–235 (230–235 (YNTGKF)) interacts with strychnine. Threonine 232 is a binding site for glycine. Zn(2+) is bound at residue histidine 243. Residues 251-272 (YLIQMYIPSLLIVILSWISFWI) traverse the membrane as a helical segment. Over 273–277 (NMDAA) the chain is Cytoplasmic. Residues 278-298 (PARVGLGITTVLTMTTQSSGS) traverse the membrane as a helical segment. Residues 299–309 (RASLPKVSYVK) lie on the Extracellular side of the membrane. Residues 310 to 330 (AIDIWMAVCLLFVFSALLEYA) traverse the membrane as a helical segment. Residues 331–425 (AVNFVSRQHK…FIQRAKKIDK (95 aa)) lie on the Cytoplasmic side of the membrane. The tract at residues 391-410 (KGANNSNTTNPPPAPSKSPE) is disordered. A helical transmembrane segment spans residues 426 to 446 (ISRIGFPMAFLIFNMFYWIIY). At 447 to 457 (KIVRREDVHNQ) the chain is on the extracellular side.

The protein belongs to the ligand-gated ion channel (TC 1.A.9) family. Glycine receptor (TC 1.A.9.3) subfamily. GLRA1 sub-subfamily. In terms of assembly, interacts with GLRB to form heteropentameric channels; this is probably the predominant form in vivo. Heteropentamer composed of four GLRA1 subunits and one GLRB subunit. Heteropentamer composed of two GLRA1 and three GLRB. Heteropentamer composed of three GLRA1 and two GLRB. Homopentamer (in vitro). Both homopentamers and heteropentamers form functional ion channels, but their characteristics are subtly different. Detected on spinal cord neurons (at protein level). Detected in spinal cord.

It localises to the postsynaptic cell membrane. The protein resides in the synapse. It is found in the perikaryon. Its subcellular location is the cell projection. The protein localises to the dendrite. It localises to the cell membrane. It carries out the reaction chloride(in) = chloride(out). With respect to regulation, channel opening is triggered by extracellular glycine. Channel characteristics depend on the subunit composition; heteropentameric channels are activated by lower glycine levels and display faster desensitization. In terms of biological role, subunit of heteromeric glycine-gated chloride channels. Plays an important role in the down-regulation of neuronal excitability. Contributes to the generation of inhibitory postsynaptic currents. Channel activity is potentiated by ethanol. Potentiation of channel activity by intoxicating levels of ethanol contribute to the sedative effects of ethanol. In Bos taurus (Bovine), this protein is Glycine receptor subunit alpha-1 (GLRA1).